The sequence spans 1160 residues: Large proline-rich protein BAG6 (1160 aa).

Residues 7–82 enclose the Ubiquitin-like domain; that stretch reads IEVTVKTLDS…HLVERPPPQS (76 aa). 8 disordered regions span residues 76–114, 206–261, 367–422, 478–547, 563–628, 672–711, 962–1038, and 1126–1160; these read ERPP…YTTS, EGQS…HPSP, IPMN…GQGT, ASAG…QTNQ, GDQT…DNLA, SGQP…AETL, SARR…AEPW, and YAQQ…SEDA. Over residues 85–94 the composition is skewed to gly residues; it reads PGGGGGGVSG. Low complexity-rich tracts occupy residues 95-110 and 223-233; these read SSGA…QSSA and SSSSFSAHPMD. Composition is skewed to polar residues over residues 247–257 and 371–417; these read QTEGETQSGPN and LGST…QQTG. 2 stretches are compositionally biased toward low complexity: residues 478–495 and 566–614; these read ASAG…AGAQ and TSTT…STAS. The segment covering 677-698 has biased composition (pro residues); the sequence is FPSPNQQPPPSQATPPSAPSGP. The segment covering 699–708 has biased composition (low complexity); the sequence is APTTAPSGGA. Over residues 1132 to 1146 the composition is skewed to basic and acidic residues; that stretch reads SDIKKRLSDDPDYNH.

Component of the bag6/bat3 complex.

The protein localises to the cytoplasm. It localises to the cytosol. It is found in the nucleus. Its subcellular location is the secreted. The protein resides in the extracellular exosome. Functionally, ATP-independent molecular chaperone preventing the aggregation of misfolded and hydrophobic patches-containing proteins. Functions as part of a cytosolic protein quality control complex, the bag6/bat3 complex, which maintains these client proteins in a soluble state and participates in their proper delivery to the endoplasmic reticulum or alternatively can promote their sorting to the proteasome where they undergo degradation. The bag6/bat3 complex is involved in the post-translational delivery of tail-anchored/type II transmembrane proteins to the endoplasmic reticulum membrane. Similarly, the bag6/bat3 complex also functions as a sorting platform for proteins of the secretory pathway that are mislocalized to the cytosol either delivering them to the proteasome for degradation or to the endoplasmic reticulum. The bag6/bat3 complex also plays a role in the endoplasmic reticulum-associated degradation (ERAD), a quality control mechanism that eliminates unwanted proteins of the endoplasmic reticulum through their retrotranslocation to the cytosol and their targeting to the proteasome. It maintains these retrotranslocated proteins in an unfolded yet soluble state condition in the cytosol to ensure their proper delivery to the proteasome. Also required for selective ubiquitin-mediated degradation of defective nascent chain polypeptides by the proteasome. Also involved in endoplasmic reticulum stress-induced pre-emptive quality control, a mechanism that selectively attenuates the translocation of newly synthesized proteins into the endoplasmic reticulum and reroutes them to the cytosol for proteasomal degradation. May ensure the proper degradation of these proteins and thereby protects the endoplasmic reticulum from protein overload upon stress. By stabilizing a large spectrum of proteins, may indirectly affect different biological processes including apoptosis. By controlling the steady-state expression of the IGF1R receptor, indirectly regulates the insulin-like growth factor receptor signaling pathway. When nuclear, may also act as a component of some chromatin regulator complex. The chain is Large proline-rich protein BAG6 from Danio rerio (Zebrafish).